Here is a 475-residue protein sequence, read N- to C-terminus: Ribulose bisphosphate carboxylase large chain (475 aa).

Residues 1 to 2 (MS) constitute a propeptide that is removed on maturation. Residue P3 is modified to N-acetylproline. The residue at position 14 (K14) is an N6,N6,N6-trimethyllysine. The substrate site is built by N123 and T173. Catalysis depends on K175, which acts as the Proton acceptor. K177 contacts substrate. Residues K201, D203, and E204 each coordinate Mg(2+). Residue K201 is modified to N6-carboxylysine. Catalysis depends on H294, which acts as the Proton acceptor. Substrate contacts are provided by R295, H327, and S379.

This sequence belongs to the RuBisCO large chain family. Type I subfamily. As to quaternary structure, heterohexadecamer of 8 large chains and 8 small chains; disulfide-linked. The disulfide link is formed within the large subunit homodimers. Mg(2+) serves as cofactor. In terms of processing, the disulfide bond which can form in the large chain dimeric partners within the hexadecamer appears to be associated with oxidative stress and protein turnover.

Its subcellular location is the plastid. The protein resides in the chloroplast. It catalyses the reaction 2 (2R)-3-phosphoglycerate + 2 H(+) = D-ribulose 1,5-bisphosphate + CO2 + H2O. The enzyme catalyses D-ribulose 1,5-bisphosphate + O2 = 2-phosphoglycolate + (2R)-3-phosphoglycerate + 2 H(+). In terms of biological role, ruBisCO catalyzes two reactions: the carboxylation of D-ribulose 1,5-bisphosphate, the primary event in carbon dioxide fixation, as well as the oxidative fragmentation of the pentose substrate in the photorespiration process. Both reactions occur simultaneously and in competition at the same active site. This chain is Ribulose bisphosphate carboxylase large chain, found in Calycanthus floridus var. glaucus (Eastern sweetshrub).